A 473-amino-acid polypeptide reads, in one-letter code: Nuclear distribution protein PAC1 (473 aa).

In terms of domain architecture, LisH spans 9–41; it reads QAEELHKSIIAYFLSAKLPKSAAALREEIADSV. Positions 60 to 87 form a coiled coil; it reads TSVVRLQKKIMDLEARNSALQSELDSAT. Polar residues predominate over residues 80–93; it reads QSELDSATPTSLSR. The tract at residues 80–99 is disordered; it reads QSELDSATPTSLSRRNQDPV. WD repeat units follow at residues 113–154, 156–196, 200–247, 250–289, 292–352, 354–393, 397–434, and 435–472; these read SHRN…RTIK, HTRA…KNIR, GHDH…CVRT, GHVE…TKST, GHEH…IKTL, GHDN…KCVR, DAHA…ALSG, and VNGI…RVFA.

This sequence belongs to the WD repeat LIS1/nudF family. Self-associates. Interacts with NDL1 and dynein.

Its subcellular location is the cytoplasm. It localises to the cytoskeleton. It is found in the spindle pole. Positively regulates the activity of the minus-end directed microtubule motor protein dynein. May enhance dynein-mediated microtubule sliding by targeting dynein to the microtubule plus end. Required for nuclear migration during vegetative growth as well as development. Required for retrograde early endosome (EE) transport from the hyphal tip. Required for localization of dynein to the mitotic spindle poles. Recruits additional proteins to the dynein complex at SPBs. The chain is Nuclear distribution protein PAC1 from Ajellomyces dermatitidis (strain ER-3 / ATCC MYA-2586) (Blastomyces dermatitidis).